Reading from the N-terminus, the 474-residue chain is Peroxisome proliferator-activated receptor alpha (474 aa).

A DNA-binding region (nuclear receptor) is located at residues 106–180; it reads NLECRVCSDK…VGMSHNAIRF (75 aa). 2 consecutive NR C4-type zinc fingers follow at residues 109 to 129 and 146 to 168; these read CRVC…CEGC and CERM…FEKC. Residues 245-472 enclose the NR LBD domain; it reads FVIHDMETLC…HPLLQEIYRD (228 aa).

Belongs to the nuclear hormone receptor family. NR1 subfamily. As to quaternary structure, heterodimer with the retinoid X receptor. In terms of tissue distribution, ubiquitous.

It localises to the nucleus. Functionally, ligand-activated transcription factor. Key regulator of lipid metabolism. Activated by lipids. Receptor for peroxisome proliferators such as hypolipidemic drugs and fatty acids. Once activated by a ligand, the receptor binds to promoter elements of target genes. Regulates the peroxisomal beta-oxidation pathway of fatty acids. In Xenopus laevis (African clawed frog), this protein is Peroxisome proliferator-activated receptor alpha (ppara).